A 266-amino-acid polypeptide reads, in one-letter code: Type II pantothenate kinase (266 aa).

Position 6–13 (6–13) interacts with ATP; sequence DAGGTLIK. Glutamate 70 serves as the catalytic Proton acceptor. ATP contacts are provided by residues threonine 99, 121 to 125, tyrosine 137, and serine 225; that span reads GGMIQ.

The protein belongs to the type II pantothenate kinase family. Homodimer.

The protein resides in the cytoplasm. The catalysed reaction is (R)-pantothenate + ATP = (R)-4'-phosphopantothenate + ADP + H(+). It functions in the pathway cofactor biosynthesis; coenzyme A biosynthesis; CoA from (R)-pantothenate: step 1/5. Catalyzes the phosphorylation of pantothenate (Pan), the first step in CoA biosynthesis. In Staphylococcus haemolyticus (strain JCSC1435), this protein is Type II pantothenate kinase.